The sequence spans 31 residues: Cytochrome b6-f complex subunit 6 (31 aa).

Residues 3–23 (VAIDYFLLVGFCFAVTSGLWI) traverse the membrane as a helical segment.

Belongs to the PetL family. As to quaternary structure, the 4 large subunits of the cytochrome b6-f complex are cytochrome b6, subunit IV (17 kDa polypeptide, PetD), cytochrome f and the Rieske protein, while the 4 small subunits are PetG, PetL, PetM and PetN. The complex functions as a dimer.

It localises to the plastid. Its subcellular location is the chloroplast thylakoid membrane. Component of the cytochrome b6-f complex, which mediates electron transfer between photosystem II (PSII) and photosystem I (PSI), cyclic electron flow around PSI, and state transitions. PetL is important for photoautotrophic growth as well as for electron transfer efficiency and stability of the cytochrome b6-f complex. This Phaeodactylum tricornutum (strain CCAP 1055/1) protein is Cytochrome b6-f complex subunit 6.